A 280-amino-acid chain; its full sequence is Virginiamycin B lyase (280 aa).

His-215 is a substrate binding site. Glu-254 serves as a coordination point for Mg(2+). His-256 acts as the Proton acceptor in catalysis. Glu-271 is a Mg(2+) binding site.

It belongs to the Vgb family. In terms of assembly, monomer. Mg(2+) is required as a cofactor.

Inactivates the type B streptogramin antibiotics by linearizing the lactone ring at the ester linkage, generating a free phenylglycine carboxylate and converting the threonyl moiety into 2-amino-butenoic acid. In Mycobacterium sp. (strain JLS), this protein is Virginiamycin B lyase.